A 1555-amino-acid chain; its full sequence is Protein TASOR (1555 aa).

Disordered regions lie at residues 1–74 (MEEN…DKRA), 645–711 (QKKK…RQET), 744–773 (QNST…GQDQ), 870–911 (ALPN…TTPS), and 1390–1462 (NQGD…PTLD). A compositionally biased stretch (polar residues) spans 35–47 (VQQTLKRTNSTES). The segment covering 61–71 (RRFQIPRKSRD) has biased composition (basic residues). A compositionally biased stretch (basic and acidic residues) spans 667 to 688 (DRQSEKAWKHRKCEENVHHDNE). 2 stretches are compositionally biased toward polar residues: residues 692-702 (SAQSLISSLGG) and 744-761 (QNST…LSQA). The span at 888 to 904 (PLHETERQRPRHDRDYC) shows a compositional bias: basic and acidic residues. Positions 1402–1417 (SKEEEDMSLDSEDDTP) are enriched in acidic residues. The span at 1448–1458 (ESPSTLNQGKT) shows a compositional bias: polar residues.

Belongs to the TASOR family. In terms of assembly, component of the HUSH complex.

It is found in the nucleus. Its subcellular location is the chromosome. Component of the HUSH complex, a multiprotein complex that mediates epigenetic repression. The HUSH complex is recruited to genomic loci rich in H3K9me3 and is probably required to maintain transcriptional silencing by promoting further deposition of H3K9me3. In Xenopus laevis (African clawed frog), this protein is Protein TASOR.